A 443-amino-acid chain; its full sequence is Phosphomevalonate kinase ERG8 (443 aa).

160-170 (ANKTGLGSSAA) is an ATP binding site.

This sequence belongs to the GHMP kinase family. Mevalonate kinase subfamily.

The enzyme catalyses (R)-5-phosphomevalonate + ATP = (R)-5-diphosphomevalonate + ADP. The protein operates within isoprenoid biosynthesis; isopentenyl diphosphate biosynthesis via mevalonate pathway; isopentenyl diphosphate from (R)-mevalonate: step 2/3. Its function is as follows. Phosphomevalonate kinase; part of the second module of ergosterol biosynthesis pathway that includes the middle steps of the pathway. ERG8 converts 5-phosphomevalonate to 5-diphosphomevalonate. The second module is carried out in the vacuole and involves the formation of farnesyl diphosphate, which is also an important intermediate in the biosynthesis of ubiquinone, dolichol, heme and prenylated proteins. Activity by the mevalonate kinase ERG12 (FG05912) first converts mevalonate into 5-phosphomevalonate. 5-phosphomevalonate is then further converted to 5-diphosphomevalonate by the phosphomevalonate kinase ERG8 (FG09764). The diphosphomevalonate decarboxylase ERG19 (FG10424) then produces isopentenyl diphosphate. The isopentenyl-diphosphate delta-isomerase IDI1 (FG09722) then catalyzes the 1,3-allylic rearrangement of the homoallylic substrate isopentenyl (IPP) to its highly electrophilic allylic isomer, dimethylallyl diphosphate (DMAPP). Finally the farnesyl diphosphate synthase ERG20 (FG06784) catalyzes the sequential condensation of isopentenyl pyrophosphate with dimethylallyl pyrophosphate, and then with the resultant geranylpyrophosphate to the ultimate product farnesyl pyrophosphate. This is Phosphomevalonate kinase ERG8 from Gibberella zeae (strain ATCC MYA-4620 / CBS 123657 / FGSC 9075 / NRRL 31084 / PH-1) (Wheat head blight fungus).